Consider the following 144-residue polypeptide: Small ribosomal subunit protein eS19A (144 aa).

The protein belongs to the eukaryotic ribosomal protein eS19 family. In terms of assembly, component of the small ribosomal subunit (SSU). Mature yeast ribosomes consist of a small (40S) and a large (60S) subunit. The 40S small subunit contains 1 molecule of ribosomal RNA (18S rRNA) and 33 different proteins (encoded by 57 genes). The large 60S subunit contains 3 rRNA molecules (25S, 5.8S and 5S rRNA) and 46 different proteins (encoded by 81 genes).

It is found in the cytoplasm. Component of the ribosome, a large ribonucleoprotein complex responsible for the synthesis of proteins in the cell. The small ribosomal subunit (SSU) binds messenger RNAs (mRNAs) and translates the encoded message by selecting cognate aminoacyl-transfer RNA (tRNA) molecules. The large subunit (LSU) contains the ribosomal catalytic site termed the peptidyl transferase center (PTC), which catalyzes the formation of peptide bonds, thereby polymerizing the amino acids delivered by tRNAs into a polypeptide chain. The nascent polypeptides leave the ribosome through a tunnel in the LSU and interact with protein factors that function in enzymatic processing, targeting, and the membrane insertion of nascent chains at the exit of the ribosomal tunnel. eS19 is required for proper maturation of the small (40S) ribosomal subunit. Binds to 40S pre-ribosomal particles, probably required after association of NOC4 but before association of ENP1, TSR1 and RIO2 with 20/21S pre-rRNA. The sequence is that of Small ribosomal subunit protein eS19A from Saccharomyces cerevisiae (strain ATCC 204508 / S288c) (Baker's yeast).